Reading from the N-terminus, the 167-residue chain is Leptin (167 aa).

A signal peptide spans 1-21; the sequence is MLCGPLCRFLWLWPYLSYVEA. The cysteines at positions 117 and 167 are disulfide-linked.

This sequence belongs to the leptin family.

The protein resides in the secreted. Key player in the regulation of energy balance and body weight control. Once released into the circulation, has central and peripheral effects by binding LEPR, found in many tissues, which results in the activation of several major signaling pathways. In the hypothalamus, acts as an appetite-regulating factor that induces a decrease in food intake and an increase in energy consumption by inducing anorexinogenic factors and suppressing orexigenic neuropeptides, also regulates bone mass and secretion of hypothalamo-pituitary-adrenal hormones. In the periphery, increases basal metabolism, influences reproductive function, regulates pancreatic beta-cell function and insulin secretion, is pro-angiogenic for endothelial cell and affects innate and adaptive immunity. In the arcuate nucleus of the hypothalamus, activates by depolarization POMC neurons inducing FOS and SOCS3 expression to release anorexigenic peptides and inhibits by hyperpolarization NPY neurons inducing SOCS3 with a consequent reduction on release of orexigenic peptides. In addition to its known satiety inducing effect, has a modulatory role in nutrient absorption. In the intestine, reduces glucose absorption by enterocytes by activating PKC and leading to a sequential activation of p38, PI3K and ERK signaling pathways which exerts an inhibitory effect on glucose absorption. Acts as a growth factor on certain tissues, through the activation of different signaling pathways increases expression of genes involved in cell cycle regulation such as CCND1, via JAK2-STAT3 pathway, or VEGFA, via MAPK1/3 and PI3K-AKT1 pathways. May also play an apoptotic role via JAK2-STAT3 pathway and up-regulation of BIRC5 expression. Pro-angiogenic, has mitogenic activity on vascular endothelial cells and plays a role in matrix remodeling by regulating the expression of matrix metalloproteinases (MMPs) and tissue inhibitors of metalloproteinases (TIMPs). In innate immunity, modulates the activity and function of neutrophils by increasing chemotaxis and the secretion of oxygen radicals. Increases phagocytosis by macrophages and enhances secretion of pro-inflammatory mediators. Increases cytotoxic ability of NK cells. Plays a pro-inflammatory role, in synergy with IL1B, by inducing NOS2 which promotes the production of IL6, IL8 and Prostaglandin E2, through a signaling pathway that involves JAK2, PI3K, MAP2K1/MEK1 and MAPK14/p38. In adaptive immunity, promotes the switch of memory T-cells towards T helper-1 cell immune responses. Increases CD4(+)CD25(-) T-cell proliferation and reduces autophagy during TCR (T-cell receptor) stimulation, through MTOR signaling pathway activation and BCL2 up-regulation. The sequence is that of Leptin (LEP) from Felis catus (Cat).